A 474-amino-acid polypeptide reads, in one-letter code: 3-isopropylmalate dehydratase large subunit (474 aa).

3 residues coordinate [4Fe-4S] cluster: C353, C413, and C416.

Belongs to the aconitase/IPM isomerase family. LeuC type 1 subfamily. As to quaternary structure, heterodimer of LeuC and LeuD. Requires [4Fe-4S] cluster as cofactor.

It catalyses the reaction (2R,3S)-3-isopropylmalate = (2S)-2-isopropylmalate. The protein operates within amino-acid biosynthesis; L-leucine biosynthesis; L-leucine from 3-methyl-2-oxobutanoate: step 2/4. Functionally, catalyzes the isomerization between 2-isopropylmalate and 3-isopropylmalate, via the formation of 2-isopropylmaleate. The protein is 3-isopropylmalate dehydratase large subunit of Roseiflexus sp. (strain RS-1).